The sequence spans 241 residues: Phosphoribosylaminoimidazole-succinocarboxamide synthase (241 aa).

The protein belongs to the SAICAR synthetase family.

The catalysed reaction is 5-amino-1-(5-phospho-D-ribosyl)imidazole-4-carboxylate + L-aspartate + ATP = (2S)-2-[5-amino-1-(5-phospho-beta-D-ribosyl)imidazole-4-carboxamido]succinate + ADP + phosphate + 2 H(+). It functions in the pathway purine metabolism; IMP biosynthesis via de novo pathway; 5-amino-1-(5-phospho-D-ribosyl)imidazole-4-carboxamide from 5-amino-1-(5-phospho-D-ribosyl)imidazole-4-carboxylate: step 1/2. The protein is Phosphoribosylaminoimidazole-succinocarboxamide synthase of Caldivirga maquilingensis (strain ATCC 700844 / DSM 13496 / JCM 10307 / IC-167).